We begin with the raw amino-acid sequence, 82 residues long: Small ribosomal subunit protein bS18 (82 aa).

Positions 1 to 10 (MTDTNQNSSR) are enriched in polar residues. The segment at 1-21 (MTDTNQNSSRRPFHRRRKTCP) is disordered.

The protein belongs to the bacterial ribosomal protein bS18 family. As to quaternary structure, part of the 30S ribosomal subunit. Forms a tight heterodimer with protein bS6.

Binds as a heterodimer with protein bS6 to the central domain of the 16S rRNA, where it helps stabilize the platform of the 30S subunit. This is Small ribosomal subunit protein bS18 from Bartonella tribocorum (strain CIP 105476 / IBS 506).